A 149-amino-acid chain; its full sequence is MMTKHKKCFIIVGVLITTNIITLIVKLTRDSQSLCPYDWIGFQNKCYYFSKEEGDWNSSKYNCSTQHADLTIIDNIEEMNFLRRYKCSSDHWIGLKMAKNRTGQWVDGATFTKSFGMRGSEGCAYLSDDGAATARCYTERKWICRKRIH.

At methionine 1–lysine 7 the chain is on the cytoplasmic side. A helical; Signal-anchor for type II membrane protein transmembrane segment spans residues cysteine 8 to valine 25. At lysine 26–histidine 149 the chain is on the extracellular side. A disulfide bridge links cysteine 35 with cysteine 46. The 104-residue stretch at phenylalanine 42–arginine 145 folds into the C-type lectin domain. N-linked (GlcNAc...) asparagine glycans are attached at residues asparagine 57, asparagine 62, and asparagine 100. Intrachain disulfides connect cysteine 63/cysteine 144 and cysteine 123/cysteine 136.

As to quaternary structure, homodimer. Interacts with NKp80/KLRF1. In terms of processing, (Microbial infection) Ubiquitinated by human herpesvirus 8 protein K5, leading to endolysosomal degradation. N-linked glycosylated; required to enable surface expression and the extent of surface expression correlates with the number of functional conventional N-glycosylation sites. As to expression, expressed preferentially in lymphoid tissues, and in most hematopoietic cell types.

Its subcellular location is the cell membrane. The protein localises to the golgi apparatus membrane. Its function is as follows. Membrane-bound protein expressed on myeloid cells which acts as a ligand to stimulate the activating receptor NKp80/KLRF1, expressed on the surface of natural killer (NK) cells. In turn, stimulates NK-cell cytotoxicity and cytokine production leading to the cytolysis of malignant CLEC2B-expressing myeloid cells. The protein is C-type lectin domain family 2 member B (CLEC2B) of Homo sapiens (Human).